A 389-amino-acid polypeptide reads, in one-letter code: Endo-chitosanase C (389 aa).

The first 22 residues, 1-22 (MPIKSFASRLALSLAICGTAMG), serve as a signal peptide directing secretion. The stretch at 280-313 (CSWPGHCAGFKNKGATCSSNDDCSDDLACQNGKC) is one R3-1 repeat. The stretch at 320 to 350 (ETCSWEGHCKGATCSSNDDCSDELACISGIC) is one R3-2 repeat. An R3-3 repeat occupies 357-387 (ETCEWEGHCEGASCSSHDDCDGNLACKNGKC).

This sequence belongs to the glycosyl hydrolase 75 family.

The protein resides in the secreted. The enzyme catalyses Endohydrolysis of beta-(1-&gt;4)-linkages between D-glucosamine residues in a partly acetylated chitosan.. In terms of biological role, chitosanase catalyzing the endo-type cleavage of chitosan, the deacylated form of chitin. Chitosanase may be crucial in the degradation of the deacetylated portion of chitin in the fungal cell wall. Chitoolisaccharides produced by the hydrolysis of partially N-acetylated chitosan are known to have many biological activities, including antibacterial activity, immune-enhancing effects, and elicitor activity. This is Endo-chitosanase C (csnC) from Aspergillus oryzae (strain ATCC 42149 / RIB 40) (Yellow koji mold).